The following is a 236-amino-acid chain: Rab-like protein 3 (236 aa).

A small GTPase-like region spans residues 1-235 (MASLDRVKVL…GGGALKNFHC (235 aa)). GTP contacts are provided by residues 16–21 (GVGKSS), 148–150 (KLD), and 179–180 (DC).

It belongs to the small GTPase superfamily. Rab family. In terms of assembly, homodimer. Interacts with GPR89; the interaction stabilizes GPR89. Interacts with RAP1GDS1.

Functionally, required for KRAS signaling regulation and modulation of cell proliferation. Regulator of KRAS prenylation, and probably prenylation of other small GTPases. Required for lymphocyte development and function. Not required for myeloid cell development. This is Rab-like protein 3 (Rabl3) from Mus musculus (Mouse).